The following is a 237-amino-acid chain: DCN1-like protein 5 (237 aa).

Serine 9, serine 41, and serine 48 each carry phosphoserine. Positions 46–232 (FSSKKCLAWF…LLDEFVEWQK (187 aa)) constitute a DCUN1 domain.

In terms of assembly, part of a complex that contains DCUN1D5, CUL1 and RBX1; this interaction is bridged by CUL1. Interacts (via the DCUN1 domain) with the unneddylated cullins: interacts with CUL1, CUL2, CUL3, CUL4A, CUL4B and CUL5; these interactions promote the cullin neddylation and the identity of the cullin dictates the affinity of the interaction. Interacts (via DCUN1 domain) with UBE2M (N-terminally acetylated form) and probably with UBE2F (N-terminally acetylated form). May also interact with regulators or subunits of cullin-RING ligases such as RBX1, RNF7, ELOB and DDB1; these interactions are bridged by cullins. Interacts with CAND1; this interaction is bridged by cullins and strongly inhibits the neddylation of cullins. These CAND-cullin-DCNL complexes can only be neddylated in the presence of a substrate adapter. Phosphorylation at Ser-41 is independent of cullin's interaction. Phosphorylated in response to both TICAM1 and MYD88 dependent Toll-like receptor (TLR) pathway activation. Phosphorylated in response to IL1B stimulation.

It is found in the nucleus. Its subcellular location is the cytoplasm. The protein localises to the cytoskeleton. It localises to the spindle. Functionally, contributes to the neddylation of all cullins by transferring NEDD8 from N-terminally acetylated NEDD8-conjugating E2s enzyme to different cullin C-terminal domain-RBX complexes which is necessary for the activation of cullin-RING E3 ubiquitin ligases (CRLs). May play a role in DNA damage response and may participate in cell proliferation and anchorage-independent cell growth. The polypeptide is DCN1-like protein 5 (Pongo abelii (Sumatran orangutan)).